The following is a 208-amino-acid chain: Translation initiation factor 2 subunit beta (208 aa).

A TRAM domain is found at 145–203; it reads VIEEGETYELRIESVGSKGDGIAKVDKYLIFVPNTSKGEIVKAKVKKISGTLAFAEIVE.

This sequence belongs to the eIF-2-beta/eIF-5 family. Heterotrimer composed of an alpha, a beta and a gamma chain.

In terms of biological role, eIF-2 functions in the early steps of protein synthesis by forming a ternary complex with GTP and initiator tRNA. This is Translation initiation factor 2 subunit beta from Methanothrix thermoacetophila (strain DSM 6194 / JCM 14653 / NBRC 101360 / PT) (Methanosaeta thermophila).